A 58-amino-acid chain; its full sequence is Small ribosomal subunit protein bS21 (58 aa).

A compositionally biased stretch (basic and acidic residues) spans 31–42 (EIRKREHYEKPS). Positions 31-58 (EIRKREHYEKPSVKRKKKSEAARKRKYN) are disordered. The span at 43–58 (VKRKKKSEAARKRKYN) shows a compositional bias: basic residues.

Belongs to the bacterial ribosomal protein bS21 family.

The sequence is that of Small ribosomal subunit protein bS21 from Agathobacter rectalis (strain ATCC 33656 / DSM 3377 / JCM 17463 / KCTC 5835 / VPI 0990) (Eubacterium rectale).